The chain runs to 251 residues: Adapter protein MecA (251 aa).

Belongs to the MecA family. Homodimer.

In terms of biological role, enables the recognition and targeting of unfolded and aggregated proteins to the ClpC protease or to other proteins involved in proteolysis. The protein is Adapter protein MecA of Streptococcus agalactiae serotype Ia (strain ATCC 27591 / A909 / CDC SS700).